We begin with the raw amino-acid sequence, 250 residues long: Ribosomal RNA small subunit methyltransferase J (250 aa).

Residues 96–97 (RD) and Asp-168 contribute to the S-adenosyl-L-methionine site.

This sequence belongs to the methyltransferase superfamily. RsmJ family.

It is found in the cytoplasm. It carries out the reaction guanosine(1516) in 16S rRNA + S-adenosyl-L-methionine = N(2)-methylguanosine(1516) in 16S rRNA + S-adenosyl-L-homocysteine + H(+). In terms of biological role, specifically methylates the guanosine in position 1516 of 16S rRNA. The protein is Ribosomal RNA small subunit methyltransferase J of Neisseria meningitidis serogroup C / serotype 2a (strain ATCC 700532 / DSM 15464 / FAM18).